A 378-amino-acid polypeptide reads, in one-letter code: Pyrimidine monooxygenase RutA (378 aa).

FMN-binding positions include Ile-65–Lys-66, Asn-131, Glu-140, Arg-156–Tyr-157, and Ser-206.

This sequence belongs to the NtaA/SnaA/DszA monooxygenase family. RutA subfamily.

The enzyme catalyses uracil + FMNH2 + NADH + O2 = (Z)-3-ureidoacrylate + FMN + NAD(+) + H2O + H(+). The catalysed reaction is thymine + FMNH2 + NADH + O2 = (Z)-2-methylureidoacrylate + FMN + NAD(+) + H2O + H(+). Its function is as follows. Catalyzes the pyrimidine ring opening between N-3 and C-4 by an unusual flavin hydroperoxide-catalyzed mechanism, adding oxygen atoms in the process to yield ureidoacrylate peracid, that immediately reacts with FMN forming ureidoacrylate and FMN-N(5)-oxide. The FMN-N(5)-oxide reacts spontaneously with NADH to produce FMN. Requires the flavin reductase RutF to regenerate FMN in vivo. This chain is Pyrimidine monooxygenase RutA, found in Cronobacter turicensis (strain DSM 18703 / CCUG 55852 / LMG 23827 / z3032).